Reading from the N-terminus, the 1978-residue chain is Centrosomal protein Cep290 (1978 aa).

Residues 1–650 form a necessary and sufficient for function in ciliogenesis, transition zone (TZ) assembly, and recruitment of DZP1 and Mks1 to the TZ. Also required for subcellular localization to the cilium basal body region; it reads MSMDIPETVS…SLCEVPEIAE (650 aa). Coiled coils occupy residues 76–384 and 471–505; these read DRRL…KSQQ and IERL…LQQD. The disordered stretch occupies residues 271-296; the sequence is QLEGKSISSGQTNSSNSQSQQEEEHA. The segment covering 276-290 has biased composition (low complexity); it reads SISSGQTNSSNSQSQ. The interval 663–688 is disordered; sequence ATRPSSPTEATMGLRRPTVPDPEEKP. Coiled-coil stretches lie at residues 853–887, 922–970, and 1192–1233; these read FEEQ…ANEQ, LAKV…TQQD, and ADAV…SRSE. The span at 1313 to 1324 shows a compositional bias: basic and acidic residues; that stretch reads KEKLRQKPEVPV. The interval 1313–1397 is disordered; the sequence is KEKLRQKPEV…EKQDTEELKE (85 aa). Positions 1329–1341 are enriched in low complexity; the sequence is STDSRSSSSSDSS. The span at 1379–1391 shows a compositional bias: acidic residues; the sequence is VTEEPEGEEEKQD. Coiled coils occupy residues 1405-1439 and 1501-1654; these read IKDL…CQER and LNRT…LESK. 2 disordered regions span residues 1684-1714 and 1859-1884; these read VGVS…AHHH and LKDG…RLQQ. Positions 1693-1708 are enriched in polar residues; sequence PSESPETYTGPSSECS. A coiled-coil region spans residues 1726 to 1935; it reads IEALKSRIEL…KEQLVKKTQL (210 aa).

As to quaternary structure, interacts (via N-terminus) with DZIP1. Expressed in sensory neurons type I and in germ cells (at protein level).

Its subcellular location is the cytoplasm. It localises to the cytoskeleton. It is found in the cilium basal body. The protein localises to the microtubule organizing center. The protein resides in the centrosome. Its subcellular location is the centriole. In terms of biological role, essential for ciliogenesis in sensory neurons and spermatocytes. During neuron and spermatocyte ciliogenesis, essential for initiating transition zone (TZ) assembly and is required for the formation of diverse connections between microtubules and between microtubules and the membrane. Regulates TZ assembly by recruiting DZIP1 to the plasma membrane where it promotes early ciliary membrane formation resulting in the initiation of TZ assembly. The chain is Centrosomal protein Cep290 from Drosophila melanogaster (Fruit fly).